The primary structure comprises 510 residues: Myosin-binding protein C, cardiac-type (510 aa).

Ig-like C2-type domains lie at 177–269, 270–347, and 378–438; these read KKST…VKEP, PYSS…TVKT, and RDQA…SFIP.

The protein belongs to the immunoglobulin superfamily. MyBP family. In terms of tissue distribution, heart.

Functionally, thick filament-associated protein located in the crossbridge region of vertebrate striated muscle a bands. In vitro it binds MHC, F-actin and native thin filaments, and modifies the activity of actin-activated myosin ATPase. It may modulate muscle contraction or may play a more structural role. This chain is Myosin-binding protein C, cardiac-type, found in Ambystoma mexicanum (Axolotl).